Here is a 78-residue protein sequence, read N- to C-terminus: Small ribosomal subunit protein uS17 (78 aa).

The protein belongs to the universal ribosomal protein uS17 family. Part of the 30S ribosomal subunit.

Functionally, one of the primary rRNA binding proteins, it binds specifically to the 5'-end of 16S ribosomal RNA. This chain is Small ribosomal subunit protein uS17, found in Agrobacterium fabrum (strain C58 / ATCC 33970) (Agrobacterium tumefaciens (strain C58)).